A 223-amino-acid chain; its full sequence is uncharacterized protein (223 aa).

Residues 40-70 form a disordered region; it reads GSKRLKPAKFGTEGKERVEQRTERQRTGSSK. Residues 51–70 are compositionally biased toward basic and acidic residues; the sequence is TEGKERVEQRTERQRTGSSK.

This is an uncharacterized protein from Homo sapiens (Human).